Consider the following 248-residue polypeptide: Isoprenyl transferase (248 aa).

D23 is a catalytic residue. D23 provides a ligand contact to Mg(2+). Substrate-binding positions include 24–27 (GNGR), W28, R36, H40, and 68–70 (STE). The active-site Proton acceptor is the N71. Substrate contacts are provided by residues W72, R74, R185, and 191 to 193 (RIS). E204 serves as a coordination point for Mg(2+).

Belongs to the UPP synthase family. Homodimer. It depends on Mg(2+) as a cofactor.

Catalyzes the condensation of isopentenyl diphosphate (IPP) with allylic pyrophosphates generating different type of terpenoids. The chain is Isoprenyl transferase from Neisseria meningitidis serogroup B (strain ATCC BAA-335 / MC58).